We begin with the raw amino-acid sequence, 583 residues long: Scarecrow-like protein 30 (583 aa).

Disordered regions lie at residues 107-154 and 182-205; these read GDLE…RKSK and EATE…KSDQ. Positions 115–124 are enriched in polar residues; the sequence is GNFSSITSLH. A compositionally biased stretch (basic and acidic residues) spans 131 to 140; the sequence is ESTRRYRHRD. The 380-residue stretch at 200–579 folds into the GRAS domain; that stretch reads QQKSDQPVDM…RVLYAVSCWK (380 aa). Positions 207–266 are leucine repeat I (LRI); the sequence is VDMRNLLMQCAQAVASFDQRRAFEKLKEIREHSSRHGDATQRLGYHFAEALEARITGTMT. Positions 285 to 350 are VHIID; sequence YKGFVQACPT…IGPPLLRVTG (66 aa). Residues 316–320 carry the VHIID motif; it reads LHIID. A leucine repeat II (LRII) region spans residues 366–398; that stretch reads ETGRRLKRFCDKFNVPFEYSFIAKNWENITLDD. The segment at 407-501 is PFYRE; the sequence is TVVNCILRLQ…RELIIRDAMS (95 aa). Positions 504 to 579 are SAW; it reads ACEGSERFAR…RVLYAVSCWK (76 aa).

It belongs to the GRAS family. Interacts with SNRNP35 and CYP95. Expressed in seedlings, leaves, sepals, stamen and pistil, and in the quiescent center of root meristem.

It is found in the nucleus. Probable transcription factor involved in plant development. The protein is Scarecrow-like protein 30 (SCL30) of Arabidopsis thaliana (Mouse-ear cress).